The sequence spans 361 residues: sn-glycerol-3-phosphate import ATP-binding protein UgpC (361 aa).

One can recognise an ABC transporter domain in the interval 4–235 (LSLKGVRKSY…PATVFVAGFI (232 aa)). An ATP-binding site is contributed by 37 to 44 (GPSGCGKS).

This sequence belongs to the ABC transporter superfamily. sn-glycerol-3-phosphate importer (TC 3.A.1.1.3) family. As to quaternary structure, the complex is composed of two ATP-binding proteins (UgpC), two transmembrane proteins (UgpA and UgpE) and a solute-binding protein (UgpB).

The protein localises to the cell inner membrane. The enzyme catalyses sn-glycerol 3-phosphate(out) + ATP + H2O = sn-glycerol 3-phosphate(in) + ADP + phosphate + H(+). In terms of biological role, part of the ABC transporter complex UgpBAEC involved in sn-glycerol-3-phosphate (G3P) import. Responsible for energy coupling to the transport system. This chain is sn-glycerol-3-phosphate import ATP-binding protein UgpC, found in Burkholderia lata (strain ATCC 17760 / DSM 23089 / LMG 22485 / NCIMB 9086 / R18194 / 383).